A 539-amino-acid polypeptide reads, in one-letter code: Phosphoenolpyruvate carboxykinase (ATP) (539 aa).

Residues Arg64, Tyr206, and Lys212 each contribute to the substrate site. Residues Lys212, His231, and 247 to 255 (GLSGTGKTT) contribute to the ATP site. Mn(2+) is bound by residues Lys212 and His231. Asp268 contributes to the Mn(2+) binding site. Residues Glu296, Arg332, 448-449 (RI), and Thr454 contribute to the ATP site. Substrate is bound at residue Arg332.

It belongs to the phosphoenolpyruvate carboxykinase (ATP) family. In terms of assembly, monomer. Mn(2+) serves as cofactor.

Its subcellular location is the cytoplasm. The enzyme catalyses oxaloacetate + ATP = phosphoenolpyruvate + ADP + CO2. It participates in carbohydrate biosynthesis; gluconeogenesis. In terms of biological role, involved in the gluconeogenesis. Catalyzes the conversion of oxaloacetate (OAA) to phosphoenolpyruvate (PEP) through direct phosphoryl transfer between the nucleoside triphosphate and OAA. The chain is Phosphoenolpyruvate carboxykinase (ATP) from Citrobacter koseri (strain ATCC BAA-895 / CDC 4225-83 / SGSC4696).